The following is a 1036-amino-acid chain: Protein CLEC16A (1036 aa).

In terms of domain architecture, FPL spans 51–198 (IRSITEILIW…AVRTITLNVY (148 aa)). Disordered regions lie at residues 375–416 (SLEM…DAEK), 437–458 (GTSVQEQNTTDEEKSAATNSEN), 876–967 (HSSP…PSLL), and 1008–1036 (SQLPTLPAADTETPAEGAVNPEPAEPTEH). The span at 381–392 (HKGKKRMQKRPN) shows a compositional bias: basic residues. Low complexity-rich tracts occupy residues 877 to 891 (SSPSLSSPSPPFASG), 898 to 923 (STSHCDSGGSSSAPSATQSPADAPTT), and 943 to 954 (NSKPSKNSSARS).

Belongs to the CLEC16A/gop-1 family. As to quaternary structure, interacts with RNF41/NRDP1. In terms of tissue distribution, ubiquitously expressed. Expressed in pancreatic islets.

The protein localises to the endosome membrane. Its subcellular location is the lysosome membrane. Regulator of mitophagy through the upstream regulation of the RNF41/NRDP1-PRKN pathway. Mitophagy is a selective form of autophagy necessary for mitochondrial quality control. The RNF41/NRDP1-PRKN pathway regulates autophagosome-lysosome fusion during late mitophagy. May protect RNF41/NRDP1 from proteasomal degradation, RNF41/NRDP1 which regulates proteasomal degradation of PRKN. Plays a key role in beta cells functions by regulating mitophagy/autophagy and mitochondrial health. The protein is Protein CLEC16A of Mus musculus (Mouse).